We begin with the raw amino-acid sequence, 250 residues long: High affinity immunoglobulin epsilon receptor subunit alpha (250 aa).

A signal peptide spans Met1–Thr23. Residues Ala24–Gln204 are Extracellular-facing. The Ig-like 1 domain occupies Ser28–Tyr104. Cys49 and Cys92 are joined by a disulfide. N-linked (GlcNAc...) asparagine glycosylation is found at Asn58, Asn66, Asn73, Asn106, Asn152, and Asn167. The Ig-like 2 domain occupies Leu114–Val181. A disulfide bridge connects residues Cys131 and Cys174. The chain crosses the membrane as a helical span at residues Leu205–Leu223. Topologically, residues Ser224–Thr250 are cytoplasmic.

In terms of assembly, tetramer of an alpha chain, a beta chain, and two disulfide linked gamma chains. Interacts with IGHE (via CH3 region). In terms of tissue distribution, expressed in bone marrow mast cells, as well as in the pineal gland at night.

The protein resides in the cell membrane. Functionally, high-affinity receptor for immunoglobulin epsilon/IgE. Mediates IgE effector functions in myeloid cells. Upon IgE binding and antigen/allergen cross-linking initiates signaling pathways that lead to myeloid cell activation and differentiation. On mast cells, basophils and eosinophils stimulates the secretion of vasoactive amines, lipid mediators and cytokines that contribute to inflammatory response, tissue remodeling and cytotoxicity against microbes. Triggers the immediate hypersensitivity response to allergens as a host defense mechanism against helminth parasites, pathogenic bacteria and venom toxicity. When dysregulated, it can elicit harmful life-threatening allergic and anaphylactic reactions. In Mus musculus (Mouse), this protein is High affinity immunoglobulin epsilon receptor subunit alpha (Fcer1a).